We begin with the raw amino-acid sequence, 269 residues long: Regulating synaptic membrane exocytosis protein 4 (269 aa).

A C2 domain is found at 115-233; sequence PMGGVEIGLQ…DLTTLAVGWY (119 aa). Phosphoserine is present on residues S254 and S257.

As to quaternary structure, binds PPFIA3. In terms of tissue distribution, brain specific.

The protein resides in the synapse. Its function is as follows. Regulates synaptic membrane exocytosis. The polypeptide is Regulating synaptic membrane exocytosis protein 4 (Rims4) (Rattus norvegicus (Rat)).